Here is a 676-residue protein sequence, read N- to C-terminus: LIM domain-containing protein 1 (676 aa).

A mediates nuclear export region spans residues 54 to 134; that stretch reads KIHLQQQQQQ…PPYPPQEQRS (81 aa). 2 disordered regions span residues 104–163 and 189–389; these read KPPL…SAFH and KWGD…TSLV. Ser-145 carries the phosphoserine modification. The tract at residues 186–260 is interaction with EGLN1/PHD2; it reads ASPKWGDKPG…IGGRSSEKPT (75 aa). Low complexity-rich tracts occupy residues 201–213 and 232–242; these read GLSV…SSPG and LSLSSSRSSEG. Phosphoserine occurs at positions 233 and 239. A compositionally biased stretch (gly residues) spans 243–253; it reads SLGGQNSGIGG. Over residues 262–271 the composition is skewed to polar residues; the sequence is LWSTASSQRV. Phosphoserine occurs at positions 272, 277, 304, and 316. Residues 343 to 360 show a composition bias toward low complexity; it reads SYLSSSAPSSSPAGLDGS. An interaction with RB1 region spans residues 404–442; that stretch reads GPLGWSSDGSLGSVLLDSPSSPRVRLPCQPLVPGPELRP. Ser-421 and Ser-424 each carry phosphoserine. 3 LIM zinc-binding domains span residues 470–531, 535–595, and 595–664; these read GACV…SGFQ, DRCF…VLAP, and PKCA…RLEK. The segment at 472 to 676 is necessary for nuclear localization; sequence CVKCSKGVFG…SSTALHQHHF (205 aa).

Belongs to the zyxin/ajuba family. In terms of assembly, interacts (via LIM domains) with TRAF6. Found in a complex with TRAF6, PRKCZ and SQSTM1. Interacts (via LIM domains) SNAI2/SLUG (via SNAG domain) and SCRT1 (via SNAG domain). Interacts with SQSTM1 and RB1. Found in a complex composed of LIMD1, VHL, EGLN1/PHD2, ELOB and CUL2. Interacts with EIF4E, AGO1, AGO2, DCP2, DDX6, LATS1, LATS2, EGLN1/PHD2, EGLN2/PHD1 and EGLN3/PHD3. Interacts (via LIM zinc-binding 2) with isoform 1 and isoform 3 of VHL. Interacts (via LIM domains) with SNAI1 (via SNAG domain). Phosphorylated during mitosis. In terms of tissue distribution, expressed in normal and breast cancer tissues (at protein level). Ubiquitous.

Its subcellular location is the cytoplasm. The protein localises to the nucleus. It is found in the P-body. The protein resides in the cell junction. It localises to the adherens junction. Its subcellular location is the focal adhesion. In terms of biological role, adapter or scaffold protein which participates in the assembly of numerous protein complexes and is involved in several cellular processes such as cell fate determination, cytoskeletal organization, repression of gene transcription, cell-cell adhesion, cell differentiation, proliferation and migration. Positively regulates microRNA (miRNA)-mediated gene silencing and is essential for P-body formation and integrity. Acts as a hypoxic regulator by bridging an association between the prolyl hydroxylases and VHL enabling efficient degradation of HIF1A. Acts as a transcriptional corepressor for SNAI1- and SNAI2/SLUG-dependent repression of E-cadherin transcription. Negatively regulates the Hippo signaling pathway and antagonizes phosphorylation of YAP1. Inhibits E2F-mediated transcription, and suppresses the expression of the majority of genes with E2F1-responsive elements. Regulates osteoblast development, function, differentiation and stress osteoclastogenesis. Enhances the ability of TRAF6 to activate adapter protein complex 1 (AP-1) and negatively regulates the canonical Wnt receptor signaling pathway in osteoblasts. May act as a tumor suppressor by inhibiting cell proliferation. The protein is LIM domain-containing protein 1 (LIMD1) of Homo sapiens (Human).